We begin with the raw amino-acid sequence, 307 residues long: Ribonuclease Z (307 aa).

Zn(2+)-binding residues include His63, His65, Asp67, His68, His141, Asp212, and His270. The active-site Proton acceptor is Asp67.

The protein belongs to the RNase Z family. In terms of assembly, homodimer. It depends on Zn(2+) as a cofactor.

It carries out the reaction Endonucleolytic cleavage of RNA, removing extra 3' nucleotides from tRNA precursor, generating 3' termini of tRNAs. A 3'-hydroxy group is left at the tRNA terminus and a 5'-phosphoryl group is left at the trailer molecule.. Zinc phosphodiesterase, which displays some tRNA 3'-processing endonuclease activity. Probably involved in tRNA maturation, by removing a 3'-trailer from precursor tRNA. The chain is Ribonuclease Z from Bacillus cereus (strain ZK / E33L).